Reading from the N-terminus, the 124-residue chain is Small ribosomal subunit protein uS13 (124 aa).

The interval P97–R124 is disordered.

The protein belongs to the universal ribosomal protein uS13 family. In terms of assembly, part of the 30S ribosomal subunit. Forms a loose heterodimer with protein S19. Forms two bridges to the 50S subunit in the 70S ribosome.

Its function is as follows. Located at the top of the head of the 30S subunit, it contacts several helices of the 16S rRNA. In the 70S ribosome it contacts the 23S rRNA (bridge B1a) and protein L5 of the 50S subunit (bridge B1b), connecting the 2 subunits; these bridges are implicated in subunit movement. Contacts the tRNAs in the A and P-sites. The chain is Small ribosomal subunit protein uS13 from Mycolicibacterium gilvum (strain PYR-GCK) (Mycobacterium gilvum (strain PYR-GCK)).